Consider the following 410-residue polypeptide: Histidine--tRNA ligase (410 aa).

The protein belongs to the class-II aminoacyl-tRNA synthetase family. As to quaternary structure, homodimer.

It is found in the cytoplasm. It carries out the reaction tRNA(His) + L-histidine + ATP = L-histidyl-tRNA(His) + AMP + diphosphate + H(+). The polypeptide is Histidine--tRNA ligase (Campylobacter hominis (strain ATCC BAA-381 / DSM 21671 / CCUG 45161 / LMG 19568 / NCTC 13146 / CH001A)).